Reading from the N-terminus, the 999-residue chain is Desmoglein-3 (999 aa).

The first 23 residues, 1-23 (MMGLFPRTTGALAIFVVVILVHG), serve as a signal peptide directing secretion. A propeptide spanning residues 24–49 (ELRIETKGQYDEEEMTMQQAKRRQKR) is cleaved from the precursor. Cadherin domains lie at 50-158 (EWVK…PVFS), 159-268 (QQIF…PMFR), 269-383 (DSQY…GIAF), and 386-499 (ASKT…VLEK). The Extracellular portion of the chain corresponds to 50 to 615 (EWVKFAKPCR…TRYGRPHSGR (566 aa)). Residues N110 and N180 are each glycosylated (N-linked (GlcNAc...) asparagine). Residues N459 and N545 are each glycosylated (N-linked (GlcNAc...) asparagine). The chain crosses the membrane as a helical span at residues 616–640 (LGPAAIGLLLLGLLLLLLAPLLLLT). Over 641–999 (CDCGAGSTGG…CTEDPCSRLI (359 aa)) the chain is Cytoplasmic. The tract at residues 642–714 (DCGAGSTGGV…NTYARGTAVE (73 aa)) is required for interaction with CTNND1 and localization at cell-cell junctions. 2 Desmoglein repeat repeats span residues 910 to 935 (LSTS…LVTE) and 936 to 966 (TYSA…ERVI).

In terms of assembly, homodimer. Part of a complex that contains DSG3, PKP1, YAP1 and YWHAG; the complex is required for localization of DSG3 and YAP1 to the cell membrane in keratinocytes. Interacts with PKP2. Interacts with CTNND1; the interaction facilitates DSG3 localization and retention at cell-cell junctions. Interacts with CDH1; the interaction is required for CDH1 localization to developing adherens junctions. Interacts with RAC1; the interaction is required for DSG3 translocation to cell-cell junctions, organization of cortical F-actin bundles and actin anchoring at cell-cell junctions. Interacts with DSC3; the interaction may limit the interaction of DSC3 with p38MAPK family members and therefore repress p38MAPK signaling activation. In terms of tissue distribution, expressed throughout the basal and spinous layer of the epidermis with weak expression in the granular layer (at protein level). Expressed in skin and mucosa (at protein level). Expressed in the basal layer of the outer root sheath of the telogen hair club, specifically at the cell membrane between the apex of the cells and the surrounding hair club (at protein level). Expression is less abundant between the lateral margins of the outer root sheath basal cells (at protein level). Also expressed in the tongue, tonsil and esophagus.

Its subcellular location is the cell membrane. The protein localises to the cell junction. It is found in the desmosome. It localises to the cytoplasm. The protein resides in the tight junction. Its function is as follows. A component of desmosome cell-cell junctions which are required for positive regulation of cellular adhesion. Required for adherens and desmosome junction assembly in response to mechanical force in keratinocytes. Required for desmosome-mediated cell-cell adhesion of cells surrounding the telogen hair club and the basal layer of the outer root sheath epithelium, consequently is essential for the anchoring of telogen hairs in the hair follicle. Required for the maintenance of the epithelial barrier via promoting desmosome-mediated intercellular attachment of suprabasal epithelium to basal cells. May play a role in the protein stability of the desmosome plaque components DSP, JUP, PKP1, PKP2 and PKP3. Required for YAP1 localization at the plasma membrane in keratinocytes in response to mechanical strain, via the formation of an interaction complex composed of DSG3, PKP1 and YWHAG. May also be involved in the positive regulation of YAP1 target gene transcription and as a result cell proliferation. Positively regulates cellular contractility and cell junction formation via organization of cortical F-actin bundles and anchoring of actin to tight junctions, in conjunction with RAC1. The cytoplasmic pool of DSG3 is required for the localization of CDH1 and CTNNB1 at developing adherens junctions, potentially via modulation of SRC activity. Inhibits keratinocyte migration via suppression of p38MAPK signaling, may therefore play a role in moderating wound healing. This is Desmoglein-3 from Homo sapiens (Human).